A 115-amino-acid polypeptide reads, in one-letter code: MSREMALVAYRNLLRSARVAFQGDMNTLFAARAEVRRNFESNRSLTAGSDELSKQLTHAEEVAKFLRENVVQGQAADDEGSYKLRIHEHTERGNNEDIRKGKGKSTLGRVKCCSS.

Residues 1 to 20 (MSREMALVAYRNLLRSARVA) constitute a mitochondrion transit peptide. A compositionally biased stretch (basic and acidic residues) spans 90–100 (TERGNNEDIRK). The segment at 90–115 (TERGNNEDIRKGKGKSTLGRVKCCSS) is disordered.

The protein belongs to the complex I LYR family. MZM1 subfamily. In terms of assembly, interacts with RIP1.

It is found in the mitochondrion matrix. Its function is as follows. Assembly factor required for Rieske Fe-S protein RIP1 incorporation into the cytochrome b-c1 (CIII) complex. Functions as a chaperone, binding to this subunit within the mitochondrial matrix and stabilizing it prior to its translocation and insertion into the late CIII dimeric intermediate within the mitochondrial inner membrane. Modulates the mitochondrial matrix zinc pool. In Phaeosphaeria nodorum (strain SN15 / ATCC MYA-4574 / FGSC 10173) (Glume blotch fungus), this protein is Mitochondrial zinc maintenance protein 1, mitochondrial (MZM1).